A 930-amino-acid chain; its full sequence is MSKKRLYEIAKELGKESKEVVARAKELGLDVKSHSSSVEEAVAAKIAASFKPAAAPKVEAKPAAPKVSAEKKAEKSEPAKPAVAKEEAKPAEPVAPKTEKVAAKPQSRNFKAEREARAKEQAERRKQNKGNNRDQQQNGNRQKNDGRNGGKQGQSNRDNRRFNDQAKKQQGQQKRRNERRQQEDKRSNQVAPRIDFKARAAALKAEQNAEYARSSEERFKQYQAAKEALAQANKRKEPEEIFEEAAKLAEQAQQVQAVVEVVPEKKEPAVDTRRKKQARPDKNRDDYDHEEDGPRKQQKNRSSQNQVRNQKNSNWNNNKKNKKGNNKNNRNQTPKPVTERKFHELPTEFEYTDGMTVAEIAKRIKREPAEIVKKLFMMGVMATQNQSLDGETIELLMVDYGIEAKQKVEVDNADIERFFVEDGYLNEDELVERPPVVTIMGHVDHGKTTLLDTLRNSRVATGEAGGITQHIGAYQIVENGKKITFLDTPGHAAFTSMRARGASVTDITILVVAADDGVMPQTIEAINHSKAANVPIIVAINKIDKPGANPERVIGELAEHGVMSTAWGGDSEFVEISAKFNQNIEELLETVLLVAEIQELKADPTVRAIGTVIEARLDKGKGAVATLLVQQGTLNVQDPIVVGNTFGRVRAMTNDLGRRVKVAGPSTPVSITGLNEAPMAGDHFAVYEDEKSARAAGEERAKRALMKQRQATQRVSLENLFDTLKAGELKSVNVIIKADVQGSVEALSASLQKIDVEGVKVTIVHSAVGAINESDVTLAEASNAFIVGFNVRPTPQARQQAEADDVEIRLHSIIYKVIEEMEEAMKGMLDPEFEEKVIGEAVIRETFKVSKVGTIGGFMVINGKVARDSKVRVIRDGVVIYDGELASLKHYKDDVKEVTNGREGGLMIDCYNDIKMDDVIEAYVMEEIKR.

Low complexity predominate over residues 50–67 (FKPAAAPKVEAKPAAPKV). 2 disordered regions span residues 50-217 (FKPA…SSEE) and 260-346 (EVVP…HELP). Basic and acidic residues-rich tracts occupy residues 68-90 (SAEK…EAKP) and 110-125 (FKAE…AERR). Over residues 129–141 (KGNNRDQQQNGNR) the composition is skewed to low complexity. Composition is skewed to basic and acidic residues over residues 157–167 (RDNRRFNDQAK) and 262–295 (VPEK…DGPR). Low complexity predominate over residues 309-318 (NQKNSNWNNN). A compositionally biased stretch (basic and acidic residues) spans 337–346 (VTERKFHELP). One can recognise a tr-type G domain in the interval 432-599 (ERPPVVTIMG…TVLLVAEIQE (168 aa)). Positions 441 to 448 (GHVDHGKT) are G1. 441 to 448 (GHVDHGKT) serves as a coordination point for GTP. The segment at 466-470 (GITQH) is G2. The G3 stretch occupies residues 487-490 (DTPG). GTP is bound by residues 487–491 (DTPGH) and 541–544 (NKID). A G4 region spans residues 541–544 (NKID). Residues 577-579 (SAK) are G5.

The protein belongs to the TRAFAC class translation factor GTPase superfamily. Classic translation factor GTPase family. IF-2 subfamily.

It localises to the cytoplasm. Functionally, one of the essential components for the initiation of protein synthesis. Protects formylmethionyl-tRNA from spontaneous hydrolysis and promotes its binding to the 30S ribosomal subunits. Also involved in the hydrolysis of GTP during the formation of the 70S ribosomal complex. The protein is Translation initiation factor IF-2 of Streptococcus pneumoniae (strain P1031).